The sequence spans 280 residues: Pantothenate synthetase (280 aa).

Position 26 to 33 (26 to 33 (MGNLHEGH)) interacts with ATP. His33 (proton donor) is an active-site residue. Gln57 serves as a coordination point for (R)-pantoate. Gln57 contributes to the beta-alanine binding site. An ATP-binding site is contributed by 145-148 (GKKD). Residue Gln151 coordinates (R)-pantoate. Residues Val174 and 182–185 (LSSR) contribute to the ATP site.

Belongs to the pantothenate synthetase family. Homodimer.

The protein resides in the cytoplasm. It carries out the reaction (R)-pantoate + beta-alanine + ATP = (R)-pantothenate + AMP + diphosphate + H(+). It functions in the pathway cofactor biosynthesis; (R)-pantothenate biosynthesis; (R)-pantothenate from (R)-pantoate and beta-alanine: step 1/1. Functionally, catalyzes the condensation of pantoate with beta-alanine in an ATP-dependent reaction via a pantoyl-adenylate intermediate. The sequence is that of Pantothenate synthetase from Bordetella bronchiseptica (strain ATCC BAA-588 / NCTC 13252 / RB50) (Alcaligenes bronchisepticus).